The following is a 332-amino-acid chain: Torsin-1A (332 aa).

Residues 1–20 form the signal peptide; that stretch reads MKLGRAVLGLLLLAPSVVQA. An interaction with SNAPIN region spans residues 91–251; it reads KPKKPLTLSL…VSVFNNKNSG (161 aa). 102–109 contacts ATP; it reads GWTGTGKN. N-linked (GlcNAc...) (high mannose) asparagine glycans are attached at residues asparagine 143 and asparagine 158. The tract at residues 251-332 is interaction with KLC1; that stretch reads GFWHSSLIDR…FTKLDYYYDD (82 aa). Positions 312-332 are interaction with SYNE3; the sequence is RVFSDKGCKTVFTKLDYYYDD.

This sequence belongs to the ClpA/ClpB family. Torsin subfamily. Homohexamer. Interacts with TOR1B; the interaction may be specific of neural tissues. Interacts (ATP-bound) with TOR1AIP1 and TOR1AIP2; the interactions induce ATPase activity. Interacts with KLHL14; preferentially when ATP-free. Interacts with KLC1 (via TPR repeats); the interaction associates TOR1A with the kinesin oligomeric complex. Interacts with COPS4; the interaction associates TOR1A with the CSN complex. Interacts with SNAPIN; the interaction is direct and associates SNAPIN with the CSN complex. Interacts with STON2. Interacts (ATP-bound) with SYNE3 (via KASH domain); the interaction is required for SYNE3 nuclear envelope localization. Interacts with VIM; the interaction associates TOR1A with the cytoskeleton. Interacts with PLEC. Interacts (ATP-bound) with SLC6A3; regulates SLC6A3 transport to the plasma membrane. In terms of processing, N-glycosylated. In terms of tissue distribution, widely expressed. Highest levels in kidney and liver. In the brain, high levels found in the dopaminergic neurons of the substantia nigra pars compacta, as well as in the neocortex, hippocampus and cerebellum. Also highly expressed in the spinal cord.

It is found in the endoplasmic reticulum lumen. The protein localises to the nucleus membrane. The protein resides in the cell projection. It localises to the growth cone. Its subcellular location is the cytoplasmic vesicle membrane. It is found in the cytoplasmic vesicle. The protein localises to the secretory vesicle. The protein resides in the synaptic vesicle. It localises to the cytoplasm. Its subcellular location is the cytoskeleton. It catalyses the reaction ATP + H2O = ADP + phosphate + H(+). In terms of biological role, protein with chaperone functions important for the control of protein folding, processing, stability and localization as well as for the reduction of misfolded protein aggregates. Involved in the regulation of synaptic vesicle recycling, controls STON2 protein stability in collaboration with the COP9 signalosome complex (CSN). In the nucleus, may link the cytoskeleton with the nuclear envelope, this mechanism seems to be crucial for the control of nuclear polarity, cell movement and, specifically in neurons, nuclear envelope integrity. Participates in the cellular trafficking and may regulate the subcellular location of multipass membrane proteins such as the dopamine transporter SLC6A3, leading to the modulation of dopamine neurotransmission. In the endoplasmic reticulum, plays a role in the quality control of protein folding by increasing clearance of misfolded proteins such as SGCE variants or holding them in an intermediate state for proper refolding. May have a redundant function with TOR1B in non-neural tissues. The protein is Torsin-1A (TOR1A) of Homo sapiens (Human).